We begin with the raw amino-acid sequence, 680 residues long: DNA ligase (680 aa).

NAD(+) is bound by residues 44 to 48 (DHVYD), 93 to 94 (SM), and Glu-125. Lys-127 functions as the N6-AMP-lysine intermediate in the catalytic mechanism. Residues Arg-148, Glu-182, Lys-298, and Lys-322 each contribute to the NAD(+) site. Zn(2+) contacts are provided by Cys-416, Cys-419, Cys-434, and Cys-439. Residues 600–680 (NPDSEWNGRR…QFSQAMKEEQ (81 aa)) form the BRCT domain.

It belongs to the NAD-dependent DNA ligase family. LigA subfamily. Mg(2+) is required as a cofactor. Requires Mn(2+) as cofactor.

It catalyses the reaction NAD(+) + (deoxyribonucleotide)n-3'-hydroxyl + 5'-phospho-(deoxyribonucleotide)m = (deoxyribonucleotide)n+m + AMP + beta-nicotinamide D-nucleotide.. DNA ligase that catalyzes the formation of phosphodiester linkages between 5'-phosphoryl and 3'-hydroxyl groups in double-stranded DNA using NAD as a coenzyme and as the energy source for the reaction. It is essential for DNA replication and repair of damaged DNA. The chain is DNA ligase from Limosilactobacillus reuteri (strain DSM 20016) (Lactobacillus reuteri).